A 644-amino-acid chain; its full sequence is Core protein VP4 (644 aa).

The protein belongs to the orbivirus VP4 family.

The protein localises to the virion. In terms of biological role, the VP4 protein is one of the five proteins (with VP1, VP3, VP6 and VP7) which form the inner capsid of the virus. This Bluetongue virus 11 (isolate USA) (BTV 11) protein is Core protein VP4 (Segment-4).